A 1234-amino-acid chain; its full sequence is Complement factor H (1234 aa).

The N-terminal stretch at 1 to 18 (MRLSARIIWLILWTVCAA) is a signal peptide. 20 Sushi domains span residues 19–82 (EDCK…ICRK), 83–143 (KPCG…LCEV), 144–207 (VKCL…RCVE), 208–264 (ILCT…FCEE), 265–322 (KRCS…RCTL), 324–386 (PCEF…VPCV), 387–444 (RKCV…KCIR), 446–507 (KTCS…SCIK), 508–566 (SCDM…SCYE), 567–624 (RECS…TCKG), 627–685 (ASCA…VCIE), 688–745 (RTCG…KCVA), 750–804 (EKCR…NCTS), 806–863 (TSCP…RCIE), 865–933 (IPCS…RCVG), 934–991 (LPCG…KCIK), 992–1050 (TDCD…VCKD), 1051–1109 (NSCV…KCRD), 1112–1170 (GKCG…TCLH), and 1171–1234 (ACVI…PTCV). 40 cysteine pairs are disulfide-bonded: cysteine 21-cysteine 66, cysteine 52-cysteine 80, cysteine 85-cysteine 129, cysteine 114-cysteine 141, cysteine 146-cysteine 192, cysteine 178-cysteine 205, cysteine 210-cysteine 251, cysteine 237-cysteine 262, cysteine 267-cysteine 309, cysteine 294-cysteine 320, cysteine 325-cysteine 374, cysteine 357-cysteine 385, cysteine 389-cysteine 431, cysteine 416-cysteine 442, cysteine 448-cysteine 494, cysteine 477-cysteine 505, cysteine 509-cysteine 553, cysteine 536-cysteine 564, cysteine 569-cysteine 610, cysteine 597-cysteine 622, cysteine 629-cysteine 672, cysteine 658-cysteine 683, cysteine 690-cysteine 732, cysteine 718-cysteine 743, cysteine 752-cysteine 791, cysteine 780-cysteine 802, cysteine 808-cysteine 850, cysteine 836-cysteine 861, cysteine 867-cysteine 920, cysteine 906-cysteine 931, cysteine 936-cysteine 978, cysteine 964-cysteine 989, cysteine 994-cysteine 1037, cysteine 1023-cysteine 1048, cysteine 1053-cysteine 1096, cysteine 1082-cysteine 1107, cysteine 1114-cysteine 1157, cysteine 1143-cysteine 1168, cysteine 1172-cysteine 1223, and cysteine 1206-cysteine 1233. Asparagine 676, asparagine 721, asparagine 773, and asparagine 801 each carry an N-linked (GlcNAc...) asparagine glycan. Residues 872-896 (TIEHGSINLPRSSEERRDSIESSSH) are disordered. Residues 883–896 (SSEERRDSIESSSH) show a composition bias toward basic and acidic residues. N-linked (GlcNAc...) asparagine glycosylation is found at asparagine 1030 and asparagine 1061. Serine 1198 carries the phosphoserine modification. Asparagine 1225 carries an N-linked (GlcNAc...) asparagine glycan.

As to quaternary structure, homodimer. Also forms homooligomers. Interacts with complement protein C3b; this interaction inhibits complement activation. Interacts with complement protein C3d. Interacts with CR3/ITGAM; this interaction mediates adhesion of neutrophils to pathogens leading to pathogen clearance. Sulfated on tyrosine residues. As to expression, CFH is one of the most abundant complement components in blood where the liver is the major source of CFH protein in vivo. in addition, CFH is secreted by additional cell types including monocytes, fibroblasts, or endothelial cells.

It is found in the secreted. Functionally, glycoprotein that plays an essential role in maintaining a well-balanced immune response by modulating complement activation. Acts as a soluble inhibitor of complement, where its binding to self markers such as glycan structures prevents complement activation and amplification on cell surfaces. Accelerates the decay of the complement alternative pathway (AP) C3 convertase C3bBb, thus preventing local formation of more C3b, the central player of the complement amplification loop. As a cofactor of the serine protease factor I, CFH also regulates proteolytic degradation of already-deposited C3b. In addition, mediates several cellular responses through interaction with specific receptors. For example, interacts with CR3/ITGAM receptor and thereby mediates the adhesion of human neutrophils to different pathogens. In turn, these pathogens are phagocytosed and destroyed. In Mus musculus (Mouse), this protein is Complement factor H (Cfh).